An 801-amino-acid polypeptide reads, in one-letter code: Phenylalanine--tRNA ligase beta subunit (801 aa).

The tRNA-binding domain maps to 39–153 (AAGLSKIVVG…EDAVPGEEVF (115 aa)). The B5 domain occupies 406 to 481 (TSDVEVSSTL…RIYGYDRLPT (76 aa)). The Mg(2+) site is built by Asp459, Asp465, Glu468, and Glu469. An FDX-ACB domain is found at 708 to 801 (TKFPAVSRDV…LEEKVNAEVR (94 aa)).

Belongs to the phenylalanyl-tRNA synthetase beta subunit family. Type 1 subfamily. Tetramer of two alpha and two beta subunits. Requires Mg(2+) as cofactor.

The protein localises to the cytoplasm. The enzyme catalyses tRNA(Phe) + L-phenylalanine + ATP = L-phenylalanyl-tRNA(Phe) + AMP + diphosphate + H(+). The chain is Phenylalanine--tRNA ligase beta subunit from Streptococcus pneumoniae serotype 4 (strain ATCC BAA-334 / TIGR4).